The chain runs to 493 residues: MLQTLFLTMLTLALVKSQYTEETITYTQCTDGYEWDPIRQQCKDIDECDIVPDACKGGMKCVNHYGGYLCLPKTAQIIVNNEHPQQETPAAEASSGATTGTVAARSMATSGVVPGGGFMASATAVAGPEVQTGRNNFVIRRNPADPQRIPSNPSHRIQCAAGYEQSEHNVCQDIDECTSGTHNCRTDQVCINLRGSFTCQCLPGYQKRGEQCVDIDECTVPPYCHQRCVNTPGSFYCQCSPGFQLAANNYTCVDINECDASNQCAQQCYNILGSFICQCNQGYELSSDRLNCEDIDECRTSSYLCQYQCVNEPGKFSCMCPQGYEVVRSRTCQDINECETTNECREDEMCWNYHGGFRCYPRNPCQDHYVLTSENRCVCPVSNTMCRELPQSIVYKYMSIRSDRSVPSDIFQIQATMIYANTINTFRIKSGNENGEFYLRQTSPVSAMLVLVKSLSGPREYIVDLEMLTVSSIGTFRTSSVLRLTIIVGPFSF.

The N-terminal stretch at 1–17 is a signal peptide; sequence MLQTLFLTMLTLALVKS. The region spanning 26–71 is the EGF-like 1; atypical domain; that stretch reads YTQCTDGYEWDPIRQQCKDIDECDIVPDACKGGMKCVNHYGGYLCL. The 41-residue stretch at 173–213 folds into the EGF-like 2; calcium-binding domain; the sequence is DIDECTSGTHNCRTDQVCINLRGSFTCQCLPGYQKRGEQCV. 15 cysteine pairs are disulfide-bonded: Cys177-Cys190, Cys184-Cys199, Cys201-Cys212, Cys218-Cys228, Cys224-Cys237, Cys239-Cys252, Cys258-Cys268, Cys264-Cys277, Cys279-Cys292, Cys298-Cys309, Cys305-Cys318, Cys320-Cys332, Cys338-Cys350, Cys344-Cys359, and Cys365-Cys377. In terms of domain architecture, EGF-like 3; calcium-binding spans 214–253; that stretch reads DIDECTVPPYCHQRCVNTPGSFYCQCSPGFQLAANNYTCV. An N-linked (GlcNAc...) asparagine glycan is attached at Asn249. The EGF-like 4; calcium-binding domain maps to 254 to 293; it reads DINECDASNQCAQQCYNILGSFICQCNQGYELSSDRLNCE. The segment at 259–493 is mediates interaction with TIMP3; that stretch reads DASNQCAQQC…LTIIVGPFSF (235 aa). The EGF-like 5; calcium-binding domain occupies 294–333; it reads DIDECRTSSYLCQYQCVNEPGKFSCMCPQGYEVVRSRTCQ. The EGF-like 6; calcium-binding domain occupies 334-378; sequence DINECETTNECREDEMCWNYHGGFRCYPRNPCQDHYVLTSENRCV.

Belongs to the fibulin family. As to quaternary structure, interacts with ECM1. Interacts with TIMP3. In terms of tissue distribution, expressed in the eye in the ciliary body, cornea, inner nuclear layer of the retina, and in the optic disk.

The protein resides in the secreted. It localises to the extracellular space. It is found in the extracellular matrix. Functionally, binds EGFR, the EGF receptor, inducing EGFR autophosphorylation and the activation of downstream signaling pathways. May play a role in cell adhesion and migration. May function as a negative regulator of chondrocyte differentiation. In the olfactory epithelium, it may regulate glial cell migration, differentiation and the ability of glial cells to support neuronal neurite outgrowth. The chain is EGF-containing fibulin-like extracellular matrix protein 1 (Efemp1) from Mus musculus (Mouse).